A 595-amino-acid polypeptide reads, in one-letter code: Elongation factor 4 (595 aa).

One can recognise a tr-type G domain in the interval 2–183; sequence KNIRNFCIIA…AIVEQVPAPA (182 aa). Residues 14–19 and 130–133 contribute to the GTP site; these read DHGKST and NKVD.

This sequence belongs to the TRAFAC class translation factor GTPase superfamily. Classic translation factor GTPase family. LepA subfamily.

It localises to the cell inner membrane. It carries out the reaction GTP + H2O = GDP + phosphate + H(+). Required for accurate and efficient protein synthesis under certain stress conditions. May act as a fidelity factor of the translation reaction, by catalyzing a one-codon backward translocation of tRNAs on improperly translocated ribosomes. Back-translocation proceeds from a post-translocation (POST) complex to a pre-translocation (PRE) complex, thus giving elongation factor G a second chance to translocate the tRNAs correctly. Binds to ribosomes in a GTP-dependent manner. This Porphyromonas gingivalis (strain ATCC BAA-308 / W83) protein is Elongation factor 4.